Consider the following 426-residue polypeptide: 3-phosphoshikimate 1-carboxyvinyltransferase (426 aa).

Lysine 22, serine 23, and arginine 27 together coordinate 3-phosphoshikimate. Residue lysine 22 participates in phosphoenolpyruvate binding. Residues glycine 96 and arginine 124 each contribute to the phosphoenolpyruvate site. 7 residues coordinate 3-phosphoshikimate: serine 170, serine 171, glutamine 172, serine 198, aspartate 314, asparagine 337, and lysine 341. Glutamine 172 contacts phosphoenolpyruvate. The active-site Proton acceptor is aspartate 314. Arginine 345, arginine 387, and lysine 412 together coordinate phosphoenolpyruvate.

Belongs to the EPSP synthase family. As to quaternary structure, monomer.

The protein resides in the cytoplasm. It carries out the reaction 3-phosphoshikimate + phosphoenolpyruvate = 5-O-(1-carboxyvinyl)-3-phosphoshikimate + phosphate. Its pathway is metabolic intermediate biosynthesis; chorismate biosynthesis; chorismate from D-erythrose 4-phosphate and phosphoenolpyruvate: step 6/7. Catalyzes the transfer of the enolpyruvyl moiety of phosphoenolpyruvate (PEP) to the 5-hydroxyl of shikimate-3-phosphate (S3P) to produce enolpyruvyl shikimate-3-phosphate and inorganic phosphate. This Aliivibrio fischeri (strain MJ11) (Vibrio fischeri) protein is 3-phosphoshikimate 1-carboxyvinyltransferase.